The following is an 814-amino-acid chain: Lon protease 1 (814 aa).

Residues 1–17 show a composition bias toward basic and acidic residues; sequence MTDDRDKTNEDPEKIIE. A disordered region spans residues 1-28; it reads MTDDRDKTNEDPEKIIEADFNPEDPDDA. A Lon N-terminal domain is found at 49–245; sequence LPIIPLRPRP…KVLVLLKKEL (197 aa). 398–405 contributes to the ATP binding site; it reads GPPGVGKT. Positions 633-814 constitute a Lon proteolytic domain; that stretch reads EDVPGVVTGL…YRDVYQVAFG (182 aa). Active-site residues include serine 721 and lysine 764.

This sequence belongs to the peptidase S16 family. Homohexamer. Organized in a ring with a central cavity.

Its subcellular location is the cytoplasm. It carries out the reaction Hydrolysis of proteins in presence of ATP.. Its function is as follows. ATP-dependent serine protease that mediates the selective degradation of mutant and abnormal proteins as well as certain short-lived regulatory proteins. Required for cellular homeostasis and for survival from DNA damage and developmental changes induced by stress. Degrades polypeptides processively to yield small peptide fragments that are 5 to 10 amino acids long. Binds to DNA in a double-stranded, site-specific manner. The chain is Lon protease 1 from Syntrophotalea carbinolica (strain DSM 2380 / NBRC 103641 / GraBd1) (Pelobacter carbinolicus).